A 232-amino-acid chain; its full sequence is 7-cyano-7-deazaguanine synthase (232 aa).

11–21 (ASGGMDSATAA) is an ATP binding site. Residues C192, C200, C203, and C206 each contribute to the Zn(2+) site.

This sequence belongs to the QueC family. Requires Zn(2+) as cofactor.

It catalyses the reaction 7-carboxy-7-deazaguanine + NH4(+) + ATP = 7-cyano-7-deazaguanine + ADP + phosphate + H2O + H(+). It functions in the pathway purine metabolism; 7-cyano-7-deazaguanine biosynthesis. In terms of biological role, catalyzes the ATP-dependent conversion of 7-carboxy-7-deazaguanine (CDG) to 7-cyano-7-deazaguanine (preQ(0)). The protein is 7-cyano-7-deazaguanine synthase of Haloarcula marismortui (strain ATCC 43049 / DSM 3752 / JCM 8966 / VKM B-1809) (Halobacterium marismortui).